Reading from the N-terminus, the 260-residue chain is MPEDYWSAKDYQRNASFVPKLTKDIVKRINLSSSDELLDLGCGDGVLTNELVSQCRRVVGIDASPDMIKAARELGLNAYVIPGEKLLDASEIPSESFDVVFSNAALHWIMRQPKNRPIVMKGVSRVLRTKGRFVAECGAFGNVSEVVGSIYSILLALGATKEQIDQANPWFFGSEDDYTRMLEEAGFHVEYVENISRPTLLNKDVREWLDTFAQHFYHAFPQWKDIIRETVYNALLVTDCRSDGKWFLQYRRLRFVAHKE.

The protein belongs to the methyltransferase superfamily.

The protein localises to the cytoplasm. Its subcellular location is the nucleus. Functionally, probable methyltransferase. This is an uncharacterized protein from Schizosaccharomyces pombe (strain 972 / ATCC 24843) (Fission yeast).